A 65-amino-acid chain; its full sequence is Large ribosomal subunit protein bL35 (65 aa).

The segment at 1 to 25 (MPKLKTKSSAAKRFKKTGKGGFKHR) is disordered.

It belongs to the bacterial ribosomal protein bL35 family.

This Francisella tularensis subsp. holarctica (strain FTNF002-00 / FTA) protein is Large ribosomal subunit protein bL35.